Here is a 130-residue protein sequence, read N- to C-terminus: Fluoride-specific ion channel FluC (130 aa).

Helical transmembrane passes span 3–23 (FVFL…YFVG), 39–59 (GTFS…HLAV), 67–87 (FGIF…SYGL), and 102–122 (VSYA…GWFL). Na(+)-binding residues include G77 and T80.

Belongs to the fluoride channel Fluc/FEX (TC 1.A.43) family.

The protein resides in the cell inner membrane. It catalyses the reaction fluoride(in) = fluoride(out). Na(+) is not transported, but it plays an essential structural role and its presence is essential for fluoride channel function. In terms of biological role, fluoride-specific ion channel. Important for reducing fluoride concentration in the cell, thus reducing its toxicity. The chain is Fluoride-specific ion channel FluC from Helicobacter pylori (strain ATCC 700392 / 26695) (Campylobacter pylori).